A 414-amino-acid polypeptide reads, in one-letter code: 2,3-diketo-5-methylthiopentyl-1-phosphate enolase (414 aa).

Lys99 serves as the catalytic Proton acceptor. Residues Lys148, 174–177 (KDDE), His265, Gly338, and 360–361 (GG) each bind substrate. 3 residues coordinate Mg(2+): Lys174, Asp176, and Glu177. Lys174 is subject to N6-carboxylysine.

It belongs to the RuBisCO large chain family. Type IV subfamily. As to quaternary structure, homodimer. Mg(2+) serves as cofactor.

The catalysed reaction is 5-methylsulfanyl-2,3-dioxopentyl phosphate = 2-hydroxy-5-methylsulfanyl-3-oxopent-1-enyl phosphate. The protein operates within amino-acid biosynthesis; L-methionine biosynthesis via salvage pathway; L-methionine from S-methyl-5-thio-alpha-D-ribose 1-phosphate: step 3/6. In terms of biological role, catalyzes the enolization of 2,3-diketo-5-methylthiopentyl-1-phosphate (DK-MTP-1-P) into 2-hydroxy-3-keto-5-methylthiopentenyl-1-phosphate (HK-MTPenyl-1-P). The polypeptide is 2,3-diketo-5-methylthiopentyl-1-phosphate enolase (Bacillus cytotoxicus (strain DSM 22905 / CIP 110041 / 391-98 / NVH 391-98)).